Here is a 55-residue protein sequence, read N- to C-terminus: Large ribosomal subunit protein bL33 (55 aa).

This sequence belongs to the bacterial ribosomal protein bL33 family.

The sequence is that of Large ribosomal subunit protein bL33 from Pseudarthrobacter chlorophenolicus (strain ATCC 700700 / DSM 12829 / CIP 107037 / JCM 12360 / KCTC 9906 / NCIMB 13794 / A6) (Arthrobacter chlorophenolicus).